Here is a 392-residue protein sequence, read N- to C-terminus: MSRAFIIDPTISAIDGLYDLLGIGIPNQGGILYSSLEYFEKALEELAAAFPGDGWLGSAADKYAGKNRNHVNFFQELADLDRQLISLIHDQANAVQTTRDILEGAKKGLEFVRPVAVDLTYIPVVGHALSAAFQAPFCAGAMAVVGGALAYLVVKTLINATQLLKLLAKLAELVAAAIADIISDVADIIKGILGEVWEFITNALNGLKELWDKLTGWVTGLFSRGWSNLESFFAGVPGLTGATSGLSQVTGLFGAAGLSASSGLAHADSLASSASLPALAGIGGGSGFGGLPSLAQVHAASTRQALRPRADGPVGAAAEQVGGQSQLVSAQGSQGMGGPVGMGGMHPSSGASKGTTTKKYSEGAAAGTEDAERAPVEADAGGGQKVLVRNVV.

Residues 302-392 (TRQALRPRAD…GQKVLVRNVV (91 aa)) are disordered. A compositionally biased stretch (gly residues) spans 334-344 (QGMGGPVGMGG).

In terms of assembly, homodimer; disulfide-linked.

It localises to the secreted. In terms of biological role, required for secretion of EsxA (ESAT-6) and EsxB (CFP-10) and for virulence. This is ESX-1 secretion-associated protein EspA from Mycobacterium tuberculosis (strain CDC 1551 / Oshkosh).